A 294-amino-acid chain; its full sequence is N-acetylmuramic acid 6-phosphate etherase (294 aa).

The SIS domain maps to 54-217 (VIKSFEEEGR…STASMIGVGK (164 aa)). The Proton donor role is filled by E82. E113 is an active-site residue.

The protein belongs to the GCKR-like family. MurNAc-6-P etherase subfamily. As to quaternary structure, homodimer.

It carries out the reaction N-acetyl-D-muramate 6-phosphate + H2O = N-acetyl-D-glucosamine 6-phosphate + (R)-lactate. Its pathway is amino-sugar metabolism; N-acetylmuramate degradation. Its function is as follows. Specifically catalyzes the cleavage of the D-lactyl ether substituent of MurNAc 6-phosphate, producing GlcNAc 6-phosphate and D-lactate. The polypeptide is N-acetylmuramic acid 6-phosphate etherase (Bacillus cereus (strain ATCC 14579 / DSM 31 / CCUG 7414 / JCM 2152 / NBRC 15305 / NCIMB 9373 / NCTC 2599 / NRRL B-3711)).